A 283-amino-acid polypeptide reads, in one-letter code: Formamidopyrimidine-DNA glycosylase (283 aa).

Catalysis depends on P2, which acts as the Schiff-base intermediate with DNA. E3 acts as the Proton donor in catalysis. The active-site Proton donor; for beta-elimination activity is the K58. DNA is bound by residues H100, R119, and R162. The segment at 247 to 283 (DVYGREGEPCRRAGCTGTVTRITQSGRSSFYCGKCQR) adopts an FPG-type zinc-finger fold. Catalysis depends on R273, which acts as the Proton donor; for delta-elimination activity.

The protein belongs to the FPG family. As to quaternary structure, monomer. Requires Zn(2+) as cofactor.

The enzyme catalyses Hydrolysis of DNA containing ring-opened 7-methylguanine residues, releasing 2,6-diamino-4-hydroxy-5-(N-methyl)formamidopyrimidine.. It catalyses the reaction 2'-deoxyribonucleotide-(2'-deoxyribose 5'-phosphate)-2'-deoxyribonucleotide-DNA = a 3'-end 2'-deoxyribonucleotide-(2,3-dehydro-2,3-deoxyribose 5'-phosphate)-DNA + a 5'-end 5'-phospho-2'-deoxyribonucleoside-DNA + H(+). Its function is as follows. Involved in base excision repair of DNA damaged by oxidation or by mutagenic agents. Acts as a DNA glycosylase that recognizes and removes damaged bases. Has a preference for oxidized purines, such as 7,8-dihydro-8-oxoguanine (8-oxoG). Has AP (apurinic/apyrimidinic) lyase activity and introduces nicks in the DNA strand. Cleaves the DNA backbone by beta-delta elimination to generate a single-strand break at the site of the removed base with both 3'- and 5'-phosphates. The chain is Formamidopyrimidine-DNA glycosylase from Ruegeria sp. (strain TM1040) (Silicibacter sp.).